We begin with the raw amino-acid sequence, 481 residues long: Aromatic amino acid aminotransferase DDB_G0272014 (481 aa).

Position 300 is an N6-(pyridoxal phosphate)lysine (lysine 300).

Belongs to the class-I pyridoxal-phosphate-dependent aminotransferase family. Pyridoxal 5'-phosphate is required as a cofactor.

Its subcellular location is the cytoplasm. It catalyses the reaction an aromatic L-alpha-amino acid + 2-oxoglutarate = an aromatic oxo-acid + L-glutamate. In terms of biological role, has aromatic amino acid transaminase activity. The sequence is that of Aromatic amino acid aminotransferase DDB_G0272014 from Dictyostelium discoideum (Social amoeba).